Consider the following 142-residue polypeptide: Midkine-B (142 aa).

The N-terminal stretch at Met-1–Gln-20 is a signal peptide. Cystine bridges form between Cys-36–Cys-60, Cys-44–Cys-69, Cys-51–Cys-73, Cys-83–Cys-115, and Cys-93–Cys-125.

This sequence belongs to the pleiotrophin family. In adults, expression is highest in the brain, eye and bone, with lower expression in the heart and lung. Not expressed in the ovary. In the tailbud stage embryo, expressed in the head and tail regions as well as in the central nervous system (CNS).

The protein localises to the secreted. Its function is as follows. Secreted protein that functions as a cytokine and growth factor and mediates its signal through cell-surface proteoglycan and non-proteoglycan receptors. Binds cell-surface proteoglycan receptors via their chondroitin sulfate (CS) groups. Thereby regulates many processes like inflammatory response, cell proliferation, cell adhesion, cell growth, cell survival, tissue regeneration, cell differentiation and cell migration. Inhibits mesoderm formation and promotes neural formation during development. Plays a role in development of the neuromuscular junction (NMJ). Has antibacterial activity against both Gram-positive and Gram-negative bacteria. The protein is Midkine-B (mdk-b) of Xenopus laevis (African clawed frog).